We begin with the raw amino-acid sequence, 356 residues long: Naringenin,2-oxoglutarate 3-dioxygenase (356 aa).

In terms of domain architecture, Fe2OG dioxygenase spans 188–292 (CVDMDQKVVV…RLSIATFQNP (105 aa)). The Fe cation site is built by histidine 215, aspartate 217, and histidine 273. Residue arginine 283 coordinates 2-oxoglutarate.

This sequence belongs to the iron/ascorbate-dependent oxidoreductase family. Requires Fe(2+) as cofactor. L-ascorbate is required as a cofactor.

The catalysed reaction is a (2S)-flavan-4-one + 2-oxoglutarate + O2 = a (2R,3R)-dihydroflavonol + succinate + CO2. The protein operates within secondary metabolite biosynthesis; flavonoid biosynthesis. Its function is as follows. Catalyzes the 3-beta-hydroxylation of 2S-flavanones to 2R,3R-dihydroflavonols which are intermediates in the biosynthesis of flavonols, anthocyanidins, catechins and proanthocyanidins in plants. The sequence is that of Naringenin,2-oxoglutarate 3-dioxygenase (FHT) from Callistephus chinensis (China aster).